Here is a 193-residue protein sequence, read N- to C-terminus: Ion-translocating oxidoreductase complex subunit A (193 aa).

Helical transmembrane passes span 5–25 (LLLF…FLGL), 39–59 (IGMG…AWMV), 62–82 (FILL…LVIA), 102–122 (LLGI…VALL), 134–154 (AVYG…FAAI), and 171–191 (SIAL…TGLV).

Belongs to the NqrDE/RnfAE family. In terms of assembly, the complex is composed of six subunits: RnfA, RnfB, RnfC, RnfD, RnfE and RnfG.

Its subcellular location is the cell inner membrane. In terms of biological role, part of a membrane-bound complex that couples electron transfer with translocation of ions across the membrane. The polypeptide is Ion-translocating oxidoreductase complex subunit A (Yersinia enterocolitica serotype O:8 / biotype 1B (strain NCTC 13174 / 8081)).